The primary structure comprises 214 residues: Probable nicotinate-nucleotide adenylyltransferase (214 aa).

This sequence belongs to the NadD family.

It catalyses the reaction nicotinate beta-D-ribonucleotide + ATP + H(+) = deamido-NAD(+) + diphosphate. The protein operates within cofactor biosynthesis; NAD(+) biosynthesis; deamido-NAD(+) from nicotinate D-ribonucleotide: step 1/1. Catalyzes the reversible adenylation of nicotinate mononucleotide (NaMN) to nicotinic acid adenine dinucleotide (NaAD). This chain is Probable nicotinate-nucleotide adenylyltransferase, found in Rubrobacter xylanophilus (strain DSM 9941 / JCM 11954 / NBRC 16129 / PRD-1).